The following is a 512-amino-acid chain: Histidine ammonia-lyase (512 aa).

Residues 145–147 (ASG) constitute a cross-link (5-imidazolinone (Ala-Gly)). 2,3-didehydroalanine (Ser) is present on Ser-146.

Belongs to the PAL/histidase family. Post-translationally, contains an active site 4-methylidene-imidazol-5-one (MIO), which is formed autocatalytically by cyclization and dehydration of residues Ala-Ser-Gly.

It is found in the cytoplasm. It carries out the reaction L-histidine = trans-urocanate + NH4(+). Its pathway is amino-acid degradation; L-histidine degradation into L-glutamate; N-formimidoyl-L-glutamate from L-histidine: step 1/3. The polypeptide is Histidine ammonia-lyase (Pseudomonas fluorescens (strain SBW25)).